The chain runs to 318 residues: Beta-ketoacyl-[acyl-carrier-protein] synthase III (318 aa).

Active-site residues include cysteine 112 and histidine 245. The segment at 246-250 (QANIR) is ACP-binding. Asparagine 275 is an active-site residue.

The protein belongs to the thiolase-like superfamily. FabH family. As to quaternary structure, homodimer.

Its subcellular location is the cytoplasm. It catalyses the reaction malonyl-[ACP] + acetyl-CoA + H(+) = 3-oxobutanoyl-[ACP] + CO2 + CoA. It participates in lipid metabolism; fatty acid biosynthesis. Functionally, catalyzes the condensation reaction of fatty acid synthesis by the addition to an acyl acceptor of two carbons from malonyl-ACP. Catalyzes the first condensation reaction which initiates fatty acid synthesis and may therefore play a role in governing the total rate of fatty acid production. Possesses both acetoacetyl-ACP synthase and acetyl transacylase activities. Its substrate specificity determines the biosynthesis of branched-chain and/or straight-chain of fatty acids. This Nitrosomonas europaea (strain ATCC 19718 / CIP 103999 / KCTC 2705 / NBRC 14298) protein is Beta-ketoacyl-[acyl-carrier-protein] synthase III.